The primary structure comprises 303 residues: Glycine--tRNA ligase alpha subunit (303 aa).

The protein belongs to the class-II aminoacyl-tRNA synthetase family. As to quaternary structure, tetramer of two alpha and two beta subunits.

It localises to the cytoplasm. It catalyses the reaction tRNA(Gly) + glycine + ATP = glycyl-tRNA(Gly) + AMP + diphosphate. This Salmonella agona (strain SL483) protein is Glycine--tRNA ligase alpha subunit.